The following is a 242-amino-acid chain: Probable transcriptional regulatory protein EUBREC_1961 (242 aa).

It belongs to the TACO1 family.

It localises to the cytoplasm. This Agathobacter rectalis (strain ATCC 33656 / DSM 3377 / JCM 17463 / KCTC 5835 / VPI 0990) (Eubacterium rectale) protein is Probable transcriptional regulatory protein EUBREC_1961.